Here is a 297-residue protein sequence, read N- to C-terminus: uncharacterized protein (297 aa).

Transmembrane regions (helical) follow at residues 17 to 37 (LALS…KEIF) and 48 to 68 (TISG…GYSI). In terms of domain architecture, PNPLA spans 17–196 (LALSGGGFYG…TLNYPITLFD (180 aa)). The GXGXXG signature appears at 21 to 26 (GGGFYG). A GXSXG motif is present at residues 51–55 (GVSVG). Serine 53 acts as the Nucleophile in catalysis. N-linked (GlcNAc...) asparagine; by host glycosylation is present at asparagine 122. Residue aspartate 183 is the Proton acceptor of the active site. The DGA/G signature appears at 183 to 185 (DGG). An N-linked (GlcNAc...) asparagine; by host glycan is attached at asparagine 239.

Its subcellular location is the membrane. In terms of biological role, probable lipid hydrolase. This is an uncharacterized protein from Acanthamoeba polyphaga mimivirus (APMV).